We begin with the raw amino-acid sequence, 124 residues long: UPF0102 protein TM1040_0449 (124 aa).

The protein belongs to the UPF0102 family.

In Ruegeria sp. (strain TM1040) (Silicibacter sp.), this protein is UPF0102 protein TM1040_0449.